Here is a 266-residue protein sequence, read N- to C-terminus: Putative carbamate hydrolase RutD (266 aa).

It belongs to the AB hydrolase superfamily. Hydrolase RutD family.

It catalyses the reaction carbamate + 2 H(+) = NH4(+) + CO2. In terms of biological role, involved in pyrimidine catabolism. May facilitate the hydrolysis of carbamate, a reaction that can also occur spontaneously. The protein is Putative carbamate hydrolase RutD of Escherichia coli O45:K1 (strain S88 / ExPEC).